Consider the following 98-residue polypeptide: DNA-binding protein Fis (98 aa).

The segment at residues 74–93 is a DNA-binding region (H-T-H motif); the sequence is QTRAALMMGINRGTLRKKLK.

The protein belongs to the transcriptional regulatory Fis family. In terms of assembly, homodimer.

Activates ribosomal RNA transcription. Plays a direct role in upstream activation of rRNA promoters. The chain is DNA-binding protein Fis from Enterobacter sp. (strain 638).